The following is a 363-amino-acid chain: F-box protein At3g44326 (363 aa).

Positions 1-23 are disordered; that stretch reads MLSSSSSSTVEQPSRGGSPGINA. In terms of domain architecture, F-box spans 27-66; it reads DVLRSNILTRLDGSSLAALSCTCSNLNSFCSDESLWRQQC.

The protein is F-box protein At3g44326 of Arabidopsis thaliana (Mouse-ear cress).